Reading from the N-terminus, the 53-residue chain is Sodium/potassium-transporting ATPase subunit gamma (53 aa).

Residues 16-34 (GGLIFAALAFIVGLVIILS) traverse the membrane as a helical segment.

It belongs to the FXYD family. In terms of assembly, regulatory subunit of the sodium/potassium-transporting ATPase which is composed of a catalytic alpha subunit, an auxiliary non-catalytic beta subunit and an additional regulatory subunit. In terms of processing, the N-terminus is blocked. In terms of tissue distribution, highest levels expressed in the kidney and spleen. Restricted to the basolateral membrane in renal epithelial cells and varies in its level of expression along the nephron.

The protein localises to the membrane. May be involved in forming the receptor site for cardiac glycoside binding or may modulate the transport function of the sodium ATPase. This chain is Sodium/potassium-transporting ATPase subunit gamma (FXYD2), found in Ovis aries (Sheep).